The following is a 509-amino-acid chain: Solute carrier family 2, facilitated glucose transporter member 4 (509 aa).

The Cytoplasmic portion of the chain corresponds to 1 to 23 (MPSGFQQIGSDDGEPPRQRVTGT). The interval 7-13 (QIGSDDG) is interaction with SRFBP1. Ser10 is modified (phosphoserine). A helical membrane pass occupies residues 24–44 (LVLAVFSAVLGSLQFGYNIGV). At 45–80 (INAPQKVIEQSYNATWLGRQGPGGPDSIPQGTLTTL) the chain is on the extracellular side. N-linked (GlcNAc...) asparagine glycosylation occurs at Asn57. The helical transmembrane segment at 81-101 (WALSVAIFSVGGMISSFLIGI) threads the bilayer. Over 102–110 (ISQWLGRKR) the chain is Cytoplasmic. A helical membrane pass occupies residues 111–131 (AMLANNVLAVLGGALMGLANA). Topologically, residues 132 to 141 (AASYEILILG) are extracellular. The helical transmembrane segment at 142-162 (RFLIGAYSGLTSGLVPMYVGE) threads the bilayer. The Cytoplasmic segment spans residues 163–170 (IAPTHLRG). The chain crosses the membrane as a helical span at residues 171 to 191 (ALGTLNQLAIVIGILVAQVLG). A D-glucose-binding site is contributed by Gln177. Residues 192 to 200 (LESMLGTAT) lie on the Extracellular side of the membrane. The chain crosses the membrane as a helical span at residues 201–221 (LWPLLLALTVLPALLQLILLP). Over 222–286 (FCPESPRYLY…QLLGSRTHRQ (65 aa)) the chain is Cytoplasmic. Cys223 carries S-palmitoyl cysteine lipidation. Position 274 is a phosphoserine; by SGK1 (Ser274). The chain crosses the membrane as a helical span at residues 287 to 307 (PLIIAVVLQLSQQLSGINAVF). Residues 298 to 299 (QQ) and Asn304 contribute to the D-glucose site. The Extracellular segment spans residues 308-322 (YYSTSIFESAGVGQP). The chain crosses the membrane as a helical span at residues 323 to 343 (AYATIGAGVVNTVFTLVSVLL). Asn333 contacts D-glucose. Residues 344 to 352 (VERAGRRTL) lie on the Cytoplasmic side of the membrane. The chain crosses the membrane as a helical span at residues 353-373 (HLLGLAGMCGCAILMTVALLL). Residues 374–384 (LERVPAMSYVS) lie on the Extracellular side of the membrane. Residues 385–405 (IVAIFGFVAFFEIGPGPIPWF) form a helical membrane-spanning segment. 2 residues coordinate D-glucose: Glu396 and Trp404. The Cytoplasmic portion of the chain corresponds to 406–416 (IVAELFSQGPR). The chain crosses the membrane as a helical span at residues 417–437 (PAAMAVAGFSNWTCNFIVGMG). Residues 438 to 444 (FQYVADA) lie on the Extracellular side of the membrane. The chain crosses the membrane as a helical span at residues 445 to 465 (MGPYVFLLFAVLLLGFFIFTF). The Cytoplasmic segment spans residues 466–508 (LKVPETRGRTFDQISAAFRRTPSLLEQEVKPSTELEYLGPDEN). Thr486 is modified (phosphothreonine). Ser488 is modified (phosphoserine). Residues 489-490 (LL) carry the Dileucine internalization motif motif.

It belongs to the major facilitator superfamily. Sugar transporter (TC 2.A.1.1) family. Glucose transporter subfamily. As to quaternary structure, binds to DAXX. Interacts via its N-terminus with SRFBP1. Interacts with NDUFA9. Interacts with TRARG1; the interaction is required for proper SLC2A4 recycling after insulin stimulation. Sumoylated. Post-translationally, palmitoylated. Palmitoylation by ZDHHC7 controls the insulin-dependent translocation of GLUT4 to the plasma membrane. As to expression, expressed in skeletal and cardiac muscles. Expressed in brown and white adipose tissues.

It localises to the cell membrane. The protein localises to the endomembrane system. Its subcellular location is the cytoplasm. The protein resides in the perinuclear region. The enzyme catalyses D-glucose(out) = D-glucose(in). Functionally, insulin-regulated facilitative glucose transporter, which plays a key role in removal of glucose from circulation. Response to insulin is regulated by its intracellular localization: in the absence of insulin, it is efficiently retained intracellularly within storage compartments in muscle and fat cells. Upon insulin stimulation, translocates from these compartments to the cell surface where it transports glucose from the extracellular milieu into the cell. This is Solute carrier family 2, facilitated glucose transporter member 4 from Mus musculus (Mouse).